Consider the following 1243-residue polypeptide: Inositol hexakisphosphate and diphosphoinositol-pentakisphosphate kinase 2 (1243 aa).

Residue serine 38 is modified to Phosphoserine. 53-54 (KK) serves as a coordination point for substrate. 4 residues coordinate ATP: arginine 134, lysine 187, histidine 194, and arginine 213. Residue 213–214 (RK) participates in substrate binding. Phosphoserine is present on serine 223. Residues 237–240 (EEFM) and 246–248 (DVK) contribute to the ATP site. Substrate-binding residues include lysine 248 and arginine 262. ATP-binding positions include serine 264, aspartate 309, and 321-323 (DVN). Substrate is bound at residue 326-329 (SFVK). Residues 371–442 (PTTSGTMMEL…VLDIARQLLM (72 aa)) form a polyphosphoinositide-binding domain region. 2 disordered regions span residues 898–941 (KGCE…RDEV) and 957–1016 (HIHR…SPVS). Positions 915 to 941 (ASRENEGRRPFKIDNDDEPHTSKRDEV) are enriched in basic and acidic residues. Residues 958 to 969 (IHRKSPLPRSRK) are compositionally biased toward basic residues. A phosphoserine mark is found at serine 1006, serine 1016, serine 1074, serine 1091, serine 1165, serine 1172, and serine 1180. Residues 1185–1243 (TPAKILPTPPATLKSTKASSKPATSGPSSAVVPNTSSRKKNITSKTETHEHKKNTGKKK) are disordered. Positions 1195–1209 (ATLKSTKASSKPATS) are enriched in low complexity. The segment covering 1210–1220 (GPSSAVVPNTS) has biased composition (polar residues). A phosphoserine mark is found at serine 1220 and serine 1221.

It belongs to the histidine acid phosphatase family. VIP1 subfamily.

It is found in the cytoplasm. Its subcellular location is the cytosol. The catalysed reaction is 1D-myo-inositol hexakisphosphate + ATP = 1-diphospho-1D-myo-inositol 2,3,4,5,6-pentakisphosphate + ADP. It catalyses the reaction 5-diphospho-1D-myo-inositol 1,2,3,4,6-pentakisphosphate + ATP + H(+) = 1,5-bis(diphospho)-1D-myo-inositol 2,3,4,6-tetrakisphosphate + ADP. In terms of biological role, bifunctional inositol kinase that acts in concert with the IP6K kinases IP6K1, IP6K2 and IP6K3 to synthesize the diphosphate group-containing inositol pyrophosphates diphosphoinositol pentakisphosphate, PP-InsP5, and bis-diphosphoinositol tetrakisphosphate, (PP)2-InsP4. PP-InsP5 and (PP)2-InsP4, also respectively called InsP7 and InsP8, regulate a variety of cellular processes, including apoptosis, vesicle trafficking, cytoskeletal dynamics, exocytosis, insulin signaling and neutrophil activation. Phosphorylates inositol hexakisphosphate (InsP6) at position 1 to produce PP-InsP5 which is in turn phosphorylated by IP6Ks to produce (PP)2-InsP4. Alternatively, phosphorylates PP-InsP5 at position 1, produced by IP6Ks from InsP6, to produce (PP)2-InsP4. Required for normal hearing. In Homo sapiens (Human), this protein is Inositol hexakisphosphate and diphosphoinositol-pentakisphosphate kinase 2.